Here is a 194-residue protein sequence, read N- to C-terminus: Fe/S biogenesis protein NfuA (194 aa).

Cysteine 151 and cysteine 154 together coordinate [4Fe-4S] cluster.

It belongs to the NfuA family. In terms of assembly, homodimer. [4Fe-4S] cluster is required as a cofactor.

Involved in iron-sulfur cluster biogenesis. Binds a 4Fe-4S cluster, can transfer this cluster to apoproteins, and thereby intervenes in the maturation of Fe/S proteins. Could also act as a scaffold/chaperone for damaged Fe/S proteins. In Pasteurella multocida (strain Pm70), this protein is Fe/S biogenesis protein NfuA.